A 1234-amino-acid chain; its full sequence is DNA-directed RNA polymerase subunit beta (1234 aa).

The segment at 1189–1212 (VLSSQDNDYEEPEENDEEDELNLD) is disordered. The span at 1195-1212 (NDYEEPEENDEEDELNLD) shows a compositional bias: acidic residues.

The protein belongs to the RNA polymerase beta chain family. The RNAP catalytic core consists of 2 alpha, 1 beta, 1 beta' and 1 omega subunit. When a sigma factor is associated with the core the holoenzyme is formed, which can initiate transcription.

The enzyme catalyses RNA(n) + a ribonucleoside 5'-triphosphate = RNA(n+1) + diphosphate. In terms of biological role, DNA-dependent RNA polymerase catalyzes the transcription of DNA into RNA using the four ribonucleoside triphosphates as substrates. This is DNA-directed RNA polymerase subunit beta from Clostridium kluyveri (strain NBRC 12016).